Reading from the N-terminus, the 180-residue chain is UPF0340 protein BLi03936/BL03990 (180 aa).

It belongs to the UPF0340 family.

This chain is UPF0340 protein BLi03936/BL03990, found in Bacillus licheniformis (strain ATCC 14580 / DSM 13 / JCM 2505 / CCUG 7422 / NBRC 12200 / NCIMB 9375 / NCTC 10341 / NRRL NRS-1264 / Gibson 46).